A 341-amino-acid polypeptide reads, in one-letter code: MDIFREIASSMKGENVFISPPSISSVLTILYYGANGSTAEQLSKYVEKEADKNKDDISFKSMNKVYGRYSAVFKDSFLRKIGDNFQTVDFTDCRTVDAINKCVDIFTEGKINPLLDEPLSPDTCLLAISAVYFKAKWLMPFEKEFTSDYPFYVSPTEMVDVSMMSMYGEAFNHASVKESFGNFSIIELPYVGDTSMVVILPDNIDGLESIEQNLTDTNFKKWCDSMDAMFIDVHIPKFKVTGSYNLVDALVKLGLTEVFGSTGDYSNMCNSDVSVDAMIHKTYIDVNEEYTEAAAATCALVADCASTVTNEFCADHPFIYVIRHVDGKILFVGRYCSPTTN.

This sequence belongs to the serpin family. Poxviruses subfamily.

The protein resides in the host cytoplasm. Functionally, viral serpin that inhibits both cysteine and serine proteinases involved in the regulation of host inflammatory and apoptosis processes. Major anti-apoptotic protein which inhibits both intrinsic and extrinsic pathways and strongly cleaves host CASP1 and CASP8 but is a rather poor inhibitor of host CASP3. Prevents the proteolytic activity of host interleukin-1-beta converting enzyme (ICE) and ICE-like enzymes. Can also block apoptosis through host tumor necrosis factor (TNF) receptor. The polypeptide is Serine proteinase inhibitor 2 (OPG199) (Bos taurus (Bovine)).